Reading from the N-terminus, the 644-residue chain is uncharacterized protein (644 aa).

The chain crosses the membrane as a helical span at residues 16-38 (LLSYLGVVGVGIAGLCIYRSVWG). Basic and acidic residues predominate over residues 586–603 (VRQLQKEAGEGEAEEHPR). The disordered stretch occupies residues 586–613 (VRQLQKEAGEGEAEEHPRARPAAGKAQR).

It localises to the membrane. This is an uncharacterized protein from Treponema pallidum (strain Nichols).